The following is a 530-amino-acid chain: Inactive ubiquitin carboxyl-terminal hydrolase 17-like protein 4 (530 aa).

The 296-residue stretch at 80–375 folds into the USP domain; sequence AGLQNMGNTC…QAYVLFYIQK (296 aa). Basic and acidic residues predominate over residues 382 to 392; it reads SESVSRGREPR. Disordered regions lie at residues 382-410 and 493-530; these read SESVSRGREPRALGAEDTDRPATQGELKR and NSTDQESMNTGTLASLQGRTRRSKGKNKHSKRSLLVCQ. Polar residues predominate over residues 495–510; it reads TDQESMNTGTLASLQG. The segment covering 511–524 has biased composition (basic residues); the sequence is RTRRSKGKNKHSKR.

The protein belongs to the peptidase C19 family. USP17 subfamily.

The protein localises to the nucleus. It localises to the endoplasmic reticulum. The chain is Inactive ubiquitin carboxyl-terminal hydrolase 17-like protein 4 (USP17L4) from Homo sapiens (Human).